Here is a 158-residue protein sequence, read N- to C-terminus: NADH-quinone oxidoreductase subunit B (158 aa).

4 residues coordinate [4Fe-4S] cluster: C37, C38, C102, and C132.

This sequence belongs to the complex I 20 kDa subunit family. As to quaternary structure, NDH-1 is composed of 14 different subunits. Subunits NuoB, C, D, E, F, and G constitute the peripheral sector of the complex. [4Fe-4S] cluster serves as cofactor.

It is found in the cell inner membrane. It catalyses the reaction a quinone + NADH + 5 H(+)(in) = a quinol + NAD(+) + 4 H(+)(out). Functionally, NDH-1 shuttles electrons from NADH, via FMN and iron-sulfur (Fe-S) centers, to quinones in the respiratory chain. The immediate electron acceptor for the enzyme in this species is believed to be ubiquinone. Couples the redox reaction to proton translocation (for every two electrons transferred, four hydrogen ions are translocated across the cytoplasmic membrane), and thus conserves the redox energy in a proton gradient. This Thioalkalivibrio sulfidiphilus (strain HL-EbGR7) protein is NADH-quinone oxidoreductase subunit B.